A 395-amino-acid polypeptide reads, in one-letter code: Yellow-related salivary protein M35 (395 aa).

The N-terminal stretch at 1–18 (MKLILTVLAFLSLQVALS) is a signal peptide.

It belongs to the major royal jelly protein family. In terms of tissue distribution, salivary gland (at protein level).

It localises to the secreted. Probably modulates blood feeding of sand flies on vertebrate species by binding and sequestering different mediators involved in the host response. Functions as a chemoattractant for host neutrophils; likely acts through a G-protein-coupled receptor and effect is dependent on calcium influx and phosphatidylinositol 3-kinases (PI3K) activity. Functionally, (Microbial infection) Probably enhances infection caused by Leishmania species in the host through augmentation of host neutrophil recruitment into the skin. The sequence is that of Yellow-related salivary protein M35 from Phlebotomus duboscqi (Sandfly).